We begin with the raw amino-acid sequence, 148 residues long: Lipoprotein signal peptidase (148 aa).

2 consecutive transmembrane segments (helical) span residues 57–77 (VLLV…FIKY) and 88–105 (VSFI…RIFY). Residues aspartate 110 and aspartate 129 contribute to the active site. The helical transmembrane segment at 124 to 144 (TFNIADILVVVGTIMLAIFLL) threads the bilayer.

Belongs to the peptidase A8 family.

The protein resides in the cell membrane. The enzyme catalyses Release of signal peptides from bacterial membrane prolipoproteins. Hydrolyzes -Xaa-Yaa-Zaa-|-(S,diacylglyceryl)Cys-, in which Xaa is hydrophobic (preferably Leu), and Yaa (Ala or Ser) and Zaa (Gly or Ala) have small, neutral side chains.. It participates in protein modification; lipoprotein biosynthesis (signal peptide cleavage). This protein specifically catalyzes the removal of signal peptides from prolipoproteins. This Clostridium novyi (strain NT) protein is Lipoprotein signal peptidase.